Here is a 402-residue protein sequence, read N- to C-terminus: MFSGALNYMKGLVGTNENLQVEESGDNKGDIEPEQRKGLLKQLSSYVGKDITSLISLPVWIFEPVSFLQVMSEPLQYNALLSKASKQDSEFLCLAYLAAFNCALYSTAVRTRKPFNPILGETFEIVDKKGEFRFLAEQVSHHPPIGVSETISEDYTLQLETLLKSKFYGNSSEVEIDGTNHFFNKKTNHHYTWNHLVTCCHNIIIGSLWLDHYGDLVIENHTTGSKAVLKFAKSGWLGAGRYGVTGEIVDCEGDVRYRITGKWNESIQLFQVMDNGSSSTTSTCLWEASKEPINNKFLFPRWVEENVIDLNDEYKKILPVTDSRLRADRIALEEGNLDVAAKEKHNLEEKQREDKRQRVAENKEWETAQFKKVDDAKFGYRWNYCGNYWEEREERVKAAASN.

The stretch at 328–361 (DRIALEEGNLDVAAKEKHNLEEKQREDKRQRVAE) forms a coiled coil.

It belongs to the OSBP family.

The protein is Oxysterol-binding protein 8 (osbH) of Dictyostelium discoideum (Social amoeba).